Consider the following 403-residue polypeptide: Heparan-sulfate 6-O-sulfotransferase 2 (403 aa).

Topologically, residues methionine 1–lysine 7 are cytoplasmic. The chain crosses the membrane as a helical; Signal-anchor for type II membrane protein span at residues valine 8–proline 28. The Lumenal segment spans residues glycine 29–arginine 403. A glycan (N-linked (GlcNAc...) asparagine) is linked at asparagine 64. Residue histidine 88–threonine 96 participates in 3'-phosphoadenylyl sulfate binding. Substrate contacts are provided by residues lysine 118–lysine 119, arginine 135, tryptophan 140, and histidine 145. Histidine 145 serves as the catalytic Proton acceptor. Positions 180 and 188 each coordinate 3'-phosphoadenylyl sulfate. The substrate site is built by histidine 192 and tryptophan 199. N-linked (GlcNAc...) asparagine glycosylation is present at asparagine 259. Threonine 312 to tyrosine 314 provides a ligand contact to 3'-phosphoadenylyl sulfate. N-linked (GlcNAc...) asparagine glycosylation occurs at asparagine 315. Arginine 318–alanine 319 provides a ligand contact to 3'-phosphoadenylyl sulfate. The segment at alanine 381 to arginine 403 is disordered. The N-linked (GlcNAc...) asparagine glycan is linked to asparagine 389.

Belongs to the sulfotransferase 6 family.

It is found in the membrane. The catalysed reaction is alpha-D-glucosaminyl-[heparan sulfate](n) + 3'-phosphoadenylyl sulfate = 6-sulfo-alpha-D-glucosaminyl-[heparan sulfate](n) + adenosine 3',5'-bisphosphate + H(+). Functionally, 6-O-sulfation enzyme which catalyzes the transfer of sulfate from 3'-phosphoadenosine 5'-phosphosulfate (PAPS) to position 6 of the N-sulfoglucosamine residue (GlcNS) of heparan sulfate. May also play a role in limb development. In Gallus gallus (Chicken), this protein is Heparan-sulfate 6-O-sulfotransferase 2 (HS6ST2).